The following is a 506-amino-acid chain: Maturase K (506 aa).

Belongs to the intron maturase 2 family. MatK subfamily.

The protein localises to the plastid. It is found in the chloroplast. Functionally, usually encoded in the trnK tRNA gene intron. Probably assists in splicing its own and other chloroplast group II introns. The polypeptide is Maturase K (Arabis alpina (Alpine rock-cress)).